A 548-amino-acid chain; its full sequence is Glucose-6-phosphate isomerase (548 aa).

Glu-354 functions as the Proton donor in the catalytic mechanism. Active-site residues include His-385 and Lys-513.

The protein belongs to the GPI family.

It is found in the cytoplasm. It catalyses the reaction alpha-D-glucose 6-phosphate = beta-D-fructose 6-phosphate. It functions in the pathway carbohydrate biosynthesis; gluconeogenesis. The protein operates within carbohydrate degradation; glycolysis; D-glyceraldehyde 3-phosphate and glycerone phosphate from D-glucose: step 2/4. In terms of biological role, catalyzes the reversible isomerization of glucose-6-phosphate to fructose-6-phosphate. The polypeptide is Glucose-6-phosphate isomerase (Marinomonas sp. (strain MWYL1)).